The primary structure comprises 172 residues: Sec-independent protein translocase protein TatB (172 aa).

Residues 1–21 (MIDLGISKLALIGAVALVVIG) traverse the membrane as a helical segment. The disordered stretch occupies residues 97 to 129 (GDPASRQTATQAAEWRPAPAKSRNGRNSWRNKQ).

It belongs to the TatB family. In terms of assembly, the Tat system comprises two distinct complexes: a TatABC complex, containing multiple copies of TatA, TatB and TatC subunits, and a separate TatA complex, containing only TatA subunits. Substrates initially bind to the TatABC complex, which probably triggers association of the separate TatA complex to form the active translocon.

It is found in the cell inner membrane. Functionally, part of the twin-arginine translocation (Tat) system that transports large folded proteins containing a characteristic twin-arginine motif in their signal peptide across membranes. Together with TatC, TatB is part of a receptor directly interacting with Tat signal peptides. TatB may form an oligomeric binding site that transiently accommodates folded Tat precursor proteins before their translocation. This chain is Sec-independent protein translocase protein TatB, found in Ralstonia nicotianae (strain ATCC BAA-1114 / GMI1000) (Ralstonia solanacearum).